A 441-amino-acid chain; its full sequence is Ribosomal protein uS12 methylthiotransferase RimO (441 aa).

The region spanning 7 to 117 is the MTTase N-terminal domain; the sequence is ASIAMISLGC…VVLEVHRAAP (111 aa). The [4Fe-4S] cluster site is built by C16, C52, C81, C150, C154, and C157. The region spanning 136-373 is the Radical SAM core domain; sequence LTPRHYAYLK…MAHQQAISAA (238 aa). The TRAM domain occupies 376–441; that stretch reads QTRVGREIDV…DEYDLHGDAV (66 aa).

This sequence belongs to the methylthiotransferase family. RimO subfamily. The cofactor is [4Fe-4S] cluster.

Its subcellular location is the cytoplasm. It carries out the reaction L-aspartate(89)-[ribosomal protein uS12]-hydrogen + (sulfur carrier)-SH + AH2 + 2 S-adenosyl-L-methionine = 3-methylsulfanyl-L-aspartate(89)-[ribosomal protein uS12]-hydrogen + (sulfur carrier)-H + 5'-deoxyadenosine + L-methionine + A + S-adenosyl-L-homocysteine + 2 H(+). In terms of biological role, catalyzes the methylthiolation of an aspartic acid residue of ribosomal protein uS12. This Bordetella petrii (strain ATCC BAA-461 / DSM 12804 / CCUG 43448) protein is Ribosomal protein uS12 methylthiotransferase RimO.